We begin with the raw amino-acid sequence, 126 residues long: Putative lipoprotein LprD (126 aa).

Residues 1 to 21 form the signal peptide; sequence MSTTRRRRPALIALVIIATCG. A lipid anchor (N-palmitoyl cysteine) is attached at Cys22. A lipid anchor (S-diacylglycerol cysteine) is attached at Cys22. The helical transmembrane segment at 40–60 threads the bilayer; sequence FQNLGYALQWPLFAWFCVYAY. The interval 70 to 101 is disordered; it reads PPQPPTGGAAAEIPAGLLPERPKPAQQPPDDP.

This sequence to M.leprae ML1177.

The protein resides in the cell membrane. The sequence is that of Putative lipoprotein LprD (lprD) from Mycobacterium tuberculosis (strain CDC 1551 / Oshkosh).